A 239-amino-acid polypeptide reads, in one-letter code: Immunoglobulin superfamily member 23 (239 aa).

The segment at Glu-63–Asn-93 is disordered. Positions Pro-94–Ser-179 constitute an Ig-like domain. Residues Leu-214–Leu-234 traverse the membrane as a helical segment.

It localises to the cell membrane. Functionally, may be involved in osteoclast differentiation. In Mus musculus (Mouse), this protein is Immunoglobulin superfamily member 23.